The chain runs to 174 residues: Gamma-crystallin D (174 aa).

Beta/gamma crystallin 'Greek key' domains are found at residues 2–40 (GKITFYEDRGFQGRHYECSTDHSNLQPYFSRCNSVRVDS) and 41–83 (GCWM…RLIP). A connecting peptide region spans residues 84–87 (HAGS). 2 consecutive Beta/gamma crystallin 'Greek key' domains span residues 88-128 (HRIR…NVLE) and 129-171 (GCWV…RRVM).

It belongs to the beta/gamma-crystallin family. As to expression, detected in the superior olivary complex and fibers of the ventral aoustic stria of the auditory hindbrain.

Its function is as follows. Crystallins are the dominant structural components of the vertebrate eye lens. This is Gamma-crystallin D (Crygd) from Rattus norvegicus (Rat).